We begin with the raw amino-acid sequence, 386 residues long: Alkanesulfonate monooxygenase (386 aa).

This sequence belongs to the SsuD family.

It catalyses the reaction an alkanesulfonate + FMNH2 + O2 = an aldehyde + FMN + sulfite + H2O + 2 H(+). Its function is as follows. Catalyzes the desulfonation of aliphatic sulfonates. In Delftia acidovorans (strain DSM 14801 / SPH-1), this protein is Alkanesulfonate monooxygenase.